The primary structure comprises 95 residues: Progonadoliberin-1 (95 aa).

A signal peptide spans 1-25 (MAPQTSNLWILLLLVVVMMMSQGCC). Glutamine 26 carries the post-translational modification Pyrrolidone carboxylic acid. The residue at position 35 (glycine 35) is a Glycine amide.

Belongs to the GnRH family.

It localises to the secreted. Its function is as follows. Stimulates the secretion of gonadotropins. The sequence is that of Progonadoliberin-1 (gnrh1) from Sparus aurata (Gilthead sea bream).